A 461-amino-acid chain; its full sequence is MGPTRWRKSTHVVVGAAVLAFVAVVVAAAALVTTGGHRAGVRAPAPPPRPPTVKAGVVPVADTAATPSAAGVTAALAVVAADPDLGKLAGRITDALTGQELWQRLDDVPLVPASTNKILTAAAALLTLDRQARISTRVVAGGQNPQGPVVLVGAGDPTLSAAPPGQDTWYHGAARIGDLVEQIRRSGVTPTAVQVDASAFSGPTMAPGWDPADIDNGDIAPIEAAMIDAGRIQPTTVNSRRSRTPALDAGRELAKALGLDPAAVTIASAPAGARQLAVVQSAPLIQRLSQMMNASDNVMAECIGREVAVAINRPQSFSGAVDAVTSRLNTAHIDTAGAALVDSSGLSLDNRLTARTLDATMQAAAGPDQPALRPLLDLLPIAGGSGTLGERFLDAATDQGPAGWLRAKTGSLTAINSLVGVLTDRSGRVLTFAFISNEAGPNGRNAMDALATKLWFCGCTT.

The N-terminal stretch at 1–28 (MGPTRWRKSTHVVVGAAVLAFVAVVVAA) is a signal peptide. S114 functions as the Acyl-ester intermediate in the catalytic mechanism. The active-site Proton acceptor is the K117. S295 is an active-site residue.

It belongs to the peptidase S13 family.

Its function is as follows. Carboxypeptidase that cleaves terminal D-alanine from peptidoglycan in the mycobacterial cell wall. May cleave L-Lys-D-Ala and/or D-Ala-D-Ala peptide bonds. Exerts important effects on mycobacterial cell morphology and cell division. The sequence is that of Carboxypeptidase Rv3627c from Mycobacterium tuberculosis (strain ATCC 25618 / H37Rv).